The chain runs to 670 residues: MNDAQALARIEELNKVLHYHNNLYYQKDTTEISDFEFDTLLQELIELEKQFPLYLKADSPSQRVGGTVTKEFASISHKYPMLSLSNTYSEEEIREFDERVQKAVGHAVEYVCEMKFDGVAISITYKNGMIAQAVTRGDGVRGDDVTNNIKTIKSIPLKIQSATFPEEFEVRGEVYLPYEMFERINQEREDIGEAALANPRNAASGTVKMQDSGIVAKRALDCFIYSLLQDSNKQPTHAAALAQLKEWGFRVSDSYKVCKNVDEIIQYINHWSEERFKLPLATDGIVIKVNDLRLQSELGMTAKSPRWAIAYKFKAEEASTPILSVEYQVGRTGAVTPVANLAPVHLAGTTVKRATLHNANEMERLNLHIGDTVFVEKGGEIIPKITRVDVSKRIAGSQMIPFIQNCPVCDTKLIRIEGEAAWYCPNDKGCAPQITGKIEHFIQRKAMNIDGIGSETIELLYQKKLIRNVADLYTLTYDQLIQLDRFGEKSVTNVLNGIEASKQTPFKSVLFAIGIRYVGSTVAEKLALHFKSINALEKASIEELLQAPEIGIKIAQSIIEWFSVDTNVQLIEDLKKAGVKLELSEHEILKPESDKFAGKSFVISGVFENYERDELKDLILKNGGKISSGITGKLNYLVAGENMGPAKLEKAQKLNITILSEAEFISLLNS.

NAD(+) is bound by residues 34-38 (DFEFD), 83-84 (SL), and glutamate 113. Lysine 115 functions as the N6-AMP-lysine intermediate in the catalytic mechanism. Positions 136, 173, 288, and 312 each coordinate NAD(+). Zn(2+)-binding residues include cysteine 406, cysteine 409, cysteine 424, and cysteine 430. Residues 591-670 (PESDKFAGKS…EAEFISLLNS (80 aa)) form the BRCT domain.

It belongs to the NAD-dependent DNA ligase family. LigA subfamily. The cofactor is Mg(2+). Mn(2+) is required as a cofactor.

The catalysed reaction is NAD(+) + (deoxyribonucleotide)n-3'-hydroxyl + 5'-phospho-(deoxyribonucleotide)m = (deoxyribonucleotide)n+m + AMP + beta-nicotinamide D-nucleotide.. Functionally, DNA ligase that catalyzes the formation of phosphodiester linkages between 5'-phosphoryl and 3'-hydroxyl groups in double-stranded DNA using NAD as a coenzyme and as the energy source for the reaction. It is essential for DNA replication and repair of damaged DNA. In Cytophaga hutchinsonii (strain ATCC 33406 / DSM 1761 / CIP 103989 / NBRC 15051 / NCIMB 9469 / D465), this protein is DNA ligase.